Consider the following 373-residue polypeptide: Sensor protein DegM (373 aa).

Helical transmembrane passes span 27-47 (ILLA…AIAV), 57-77 (LFLL…LCVN), 91-111 (YASL…LYLI), and 122-142 (VAGW…TYLF). In terms of domain architecture, Histidine kinase spans 170–370 (SIAHEVRNPL…KVVLSLPIEK (201 aa)). Position 173 is a phosphohistidine; by autocatalysis (histidine 173).

The protein localises to the cell membrane. The enzyme catalyses ATP + protein L-histidine = ADP + protein N-phospho-L-histidine.. Its function is as follows. Involved in a sensory transduction pathway that enhances the production of minor proteases. This Bacillus sp. (strain B21-2) protein is Sensor protein DegM (degM).